Consider the following 203-residue polypeptide: Somatotropin (203 aa).

A signal peptide spans 1 to 17; sequence MNRVILLLSVMCVGVSS. The residue at position 18 (Q18) is a Pyrrolidone carboxylic acid. 2 cysteine pairs are disulfide-bonded: C68–C176 and C193–C201.

It belongs to the somatotropin/prolactin family.

The protein localises to the secreted. Its function is as follows. Growth hormone plays an important role in growth control and is involved in the regulation of several anabolic processes. Implicated as an osmoregulatory substance important for seawater adaptation. The chain is Somatotropin (gh) from Verasper variegatus (Spotted flounder).